The sequence spans 120 residues: U13-lycotoxin-Ls1f (120 aa).

An N-terminal signal peptide occupies residues 1–16 (MKILFVLISILYAVYC). A propeptide spanning residues 17–54 (FSSEEDVDSAYLANELEPVEDINSEQYAALEPKEEQER) is cleaved from the precursor. Intrachain disulfides connect Cys56–Cys70, Cys63–Cys76, Cys69–Cys87, and Cys78–Cys85. In terms of domain architecture, Agouti spans 56-95 (CAGMGQDCKDDCDCCLNIATCNCWFGRYFCSCTFGDYQTC).

Belongs to the neurotoxin 05 (agouti) family. Post-translationally, contains 6 disulfide bonds. In terms of tissue distribution, expressed by the venom gland.

The protein resides in the secreted. This Lycosa singoriensis (Wolf spider) protein is U13-lycotoxin-Ls1f.